The chain runs to 130 residues: DNA-directed RNA polymerase subunit omega (130 aa).

Residues 109–130 form a disordered region; the sequence is EEELLKGLEGLAPPEEQPEEDE.

The protein belongs to the RNA polymerase subunit omega family. The RNAP catalytic core consists of 2 alpha, 1 beta, 1 beta' and 1 omega subunit. When a sigma factor is associated with the core the holoenzyme is formed, which can initiate transcription.

It carries out the reaction RNA(n) + a ribonucleoside 5'-triphosphate = RNA(n+1) + diphosphate. Its function is as follows. Promotes RNA polymerase assembly. Latches the N- and C-terminal regions of the beta' subunit thereby facilitating its interaction with the beta and alpha subunits. This chain is DNA-directed RNA polymerase subunit omega, found in Rhodopseudomonas palustris (strain BisB5).